A 380-amino-acid chain; its full sequence is Cytochrome b (380 aa).

A run of 4 helical transmembrane segments spans residues 34–54 (FGSLLGLCLIAQIATGLFLAM), 78–99 (WLLRNLHANGASFFFICIYFHI), 114–134 (WNIGVILLFLLMATAFVGYVL), and 179–199 (FFTFHFILPFIITAVSLIHLL). Residues H84 and H98 each contribute to the heme b site. Positions 183 and 197 each coordinate heme b. A ubiquinone is bound at residue H202. Transmembrane regions (helical) follow at residues 227 to 247 (YKDLLGFVIMLGALASLSTFA), 289 to 309 (LGGVLAVVLSIMVLFLMPIIH), 321 to 341 (IAKTFFWALIANTAILTWIGG), and 348 to 368 (FITIGQIASGLYFLIFVLLIP).

This sequence belongs to the cytochrome b family. The cytochrome bc1 complex contains 3 respiratory subunits (MT-CYB, CYC1 and UQCRFS1), 2 core proteins (UQCRC1 and UQCRC2) and probably 6 low-molecular weight proteins. The cofactor is heme b.

The protein localises to the mitochondrion inner membrane. In terms of biological role, component of the ubiquinol-cytochrome c reductase complex (complex III or cytochrome b-c1 complex) that is part of the mitochondrial respiratory chain. The b-c1 complex mediates electron transfer from ubiquinol to cytochrome c. Contributes to the generation of a proton gradient across the mitochondrial membrane that is then used for ATP synthesis. The polypeptide is Cytochrome b (mt-cyb) (Rana amurensis (Siberian wood frog)).